We begin with the raw amino-acid sequence, 896 residues long: Serine/threonine-protein kinase TAO3 (896 aa).

The Protein kinase domain occupies 24 to 277; it reads FVDLHEIGHG…SLELLRHDFV (254 aa). ATP-binding positions include 30 to 38 and Lys-53; that span reads IGHGSFGAV. The active-site Proton acceptor is the Asp-147. 2 disordered regions span residues 316 to 366 and 403 to 423; these read SRNG…SVNS and DEAD…VQSQ. Residues 334–348 are compositionally biased toward polar residues; that stretch reads GTSLTRKMDSLGSNH. A compositionally biased stretch (low complexity) spans 349–366; sequence SIPSTSVSTGSQSSSVNS. The span at 403–414 shows a compositional bias: basic and acidic residues; the sequence is DEADHRDPRPEL. Coiled-coil stretches lie at residues 450-513, 545-650, and 752-873; these read EQEN…SKRQ, SFLE…LIRQ, and LKSL…IETF. Residues 565 to 587 show a composition bias toward basic and acidic residues; it reads LNEDHSTPKKEKQERISKHKENL. The interval 565–593 is disordered; that stretch reads LNEDHSTPKKEKQERISKHKENLQHTQAE.

This sequence belongs to the protein kinase superfamily. STE Ser/Thr protein kinase family. STE20 subfamily.

Its subcellular location is the cytoplasm. It is found in the cell membrane. The protein localises to the membrane raft. It localises to the lipid droplet. It carries out the reaction L-seryl-[protein] + ATP = O-phospho-L-seryl-[protein] + ADP + H(+). The catalysed reaction is L-threonyl-[protein] + ATP = O-phospho-L-threonyl-[protein] + ADP + H(+). Functionally, serine/threonine-protein kinase that acts as a regulator of the p38/MAPK14 stress-activated MAPK cascade and of the MAPK8/JNK cascade. In response to DNA damage, involved in the G2/M transition DNA damage checkpoint by activating the p38/MAPK14 stress-activated MAPK cascade, probably by mediating phosphorylation of upstream MAP kinase kinases. Inhibits basal activity of the MAPK8/JNK cascade. The polypeptide is Serine/threonine-protein kinase TAO3 (taok3) (Xenopus laevis (African clawed frog)).